Here is a 141-residue protein sequence, read N- to C-terminus: Cystatin-S (141 aa).

The N-terminal stretch at 1–27 (MAYLLHAQLFLLTTFILVLNMRLCPVL) is a signal peptide. The Secondary area of contact motif lies at 76 to 80 (QVVAG). 2 disulfide bridges follow: cysteine 94-cysteine 104 and cysteine 118-cysteine 138.

This sequence belongs to the cystatin family. Found in saliva, tears, urine and seminal fluid.

Its subcellular location is the secreted. This protein strongly inhibits papain and ficin, partially inhibits stem bromelain and bovine cathepsin C, but does not inhibit porcine cathepsin B or clostripain. Papain is inhibited non-competitively. This Rattus norvegicus (Rat) protein is Cystatin-S (Cst4).